The following is a 247-amino-acid chain: Caffeoyl-CoA O-methyltransferase (247 aa).

Lysine 21 lines the substrate pocket. S-adenosyl-L-methionine is bound by residues threonine 63, glutamate 85, 87–88 (GV), serine 93, aspartate 111, and alanine 140. Substrate is bound at residue aspartate 163. Aspartate 163 is a binding site for a divalent metal cation. S-adenosyl-L-methionine is bound at residue aspartate 165. A divalent metal cation contacts are provided by aspartate 189 and asparagine 190. Residue asparagine 194 coordinates substrate.

It belongs to the class I-like SAM-binding methyltransferase superfamily. Cation-dependent O-methyltransferase family. CCoAMT subfamily. A divalent metal cation serves as cofactor.

The enzyme catalyses (E)-caffeoyl-CoA + S-adenosyl-L-methionine = (E)-feruloyl-CoA + S-adenosyl-L-homocysteine + H(+). Its pathway is aromatic compound metabolism; phenylpropanoid biosynthesis. In terms of biological role, methylates caffeoyl-CoA to feruloyl-CoA and 5-hydroxyferuloyl-CoA to sinapoyl-CoA. Plays a role in the synthesis of feruloylated polysaccharides. Involved in the reinforcement of the plant cell wall. Also involved in the responding to wounding or pathogen challenge by the increased formation of cell wall-bound ferulic acid polymers. This is Caffeoyl-CoA O-methyltransferase from Populus tremuloides (Quaking aspen).